We begin with the raw amino-acid sequence, 305 residues long: Homoserine O-acetyltransferase (305 aa).

C142 acts as the Acyl-thioester intermediate in catalysis. Positions 163 and 192 each coordinate substrate. The Proton acceptor role is filled by H235. E237 is an active-site residue. R249 serves as a coordination point for substrate.

It belongs to the MetA family.

The protein resides in the cytoplasm. It carries out the reaction L-homoserine + acetyl-CoA = O-acetyl-L-homoserine + CoA. The protein operates within amino-acid biosynthesis; L-methionine biosynthesis via de novo pathway; O-acetyl-L-homoserine from L-homoserine: step 1/1. Its function is as follows. Transfers an acetyl group from acetyl-CoA to L-homoserine, forming acetyl-L-homoserine. The chain is Homoserine O-acetyltransferase from Cereibacter sphaeroides (strain KD131 / KCTC 12085) (Rhodobacter sphaeroides).